The chain runs to 424 residues: MVSSMKVEWYLDFVDLNYEPGRDELIVEYYFEPNGVSPEEAAGRIASESSIGTWTTLWKLPEMAKRSMAKVFYLEKHGEGYIAKIAYPLTLFEEGSLVQLFSAIAGNVFGMKALKNLRLLDFHPPYEYLRHFKGPQFGVKGIREFMGIKDRPLTATVPKPKMGWSVEEYAEIAYELWSGGIDLLKDDENFTSFPFNRFEERVKKLYRVRDRVEAETGETKEYLINITGPVNVMEKRAELVANEGGQYVMIDIVVAGWSALQYMREVTEDLGLAIHAHRAMHAAFTRNPKHGITMFALAKAARMIGVDQIHTGTAVGKMAGDYEEIKKINDFLLSKWEHIRPVFPVASGGLHPGLMPELIRLFGKDLVIQAGGGVMGHPDGPRAGAKALRDAIDAAIEGLDLEEKAKSSPELKKALDKWGYLKPK.

Lys159 serves as the catalytic Proton acceptor. Lys161 is a binding site for substrate. Positions 185, 187, and 188 each coordinate Mg(2+). Lys185 is modified (N6-carboxylysine). His277 (proton acceptor) is an active-site residue. Substrate contacts are provided by residues Arg278, His310, 347 to 349 (SGG), and 369 to 372 (QAGG).

Belongs to the RuBisCO large chain family. Type III subfamily. As to quaternary structure, homodimer or homodecamer. In contrast to form I RuBisCO, the form III RuBisCO is composed solely of large subunits. The cofactor is Mg(2+).

It catalyses the reaction 2 (2R)-3-phosphoglycerate + 2 H(+) = D-ribulose 1,5-bisphosphate + CO2 + H2O. It carries out the reaction D-ribulose 1,5-bisphosphate + O2 = 2-phosphoglycolate + (2R)-3-phosphoglycerate + 2 H(+). Catalyzes the addition of molecular CO(2) and H(2)O to ribulose 1,5-bisphosphate (RuBP), generating two molecules of 3-phosphoglycerate (3-PGA). Functions in an archaeal AMP degradation pathway, together with AMP phosphorylase and R15P isomerase. This chain is Ribulose bisphosphate carboxylase, found in Pyrococcus abyssi (strain GE5 / Orsay).